A 230-amino-acid polypeptide reads, in one-letter code: Ureidoacrylate amidohydrolase RutB (230 aa).

The active-site Proton acceptor is the D23. K132 is an active-site residue. The Nucleophile role is filled by C165.

This sequence belongs to the isochorismatase family. RutB subfamily.

The enzyme catalyses (Z)-3-ureidoacrylate + H2O + H(+) = (Z)-3-aminoacrylate + NH4(+) + CO2. It carries out the reaction (Z)-3-ureidoacrylate + H2O = (Z)-3-aminoacrylate + carbamate + H(+). It catalyses the reaction (Z)-2-methylureidoacrylate + H2O + H(+) = (Z)-2-methylaminoacrylate + NH4(+) + CO2. In terms of biological role, hydrolyzes ureidoacrylate to form aminoacrylate and carbamate. The carbamate hydrolyzes spontaneously, thereby releasing one of the nitrogen atoms of the pyrimidine ring as ammonia and one of its carbon atoms as CO2. The sequence is that of Ureidoacrylate amidohydrolase RutB from Yersinia enterocolitica serotype O:8 / biotype 1B (strain NCTC 13174 / 8081).